The primary structure comprises 216 residues: UPF0502 protein Pfl01_3711 (216 aa).

Belongs to the UPF0502 family.

This is UPF0502 protein Pfl01_3711 from Pseudomonas fluorescens (strain Pf0-1).